Consider the following 98-residue polypeptide: Large ribosomal subunit protein uL23 (98 aa).

Belongs to the universal ribosomal protein uL23 family. As to quaternary structure, part of the 50S ribosomal subunit. Contacts protein L29, and trigger factor when it is bound to the ribosome.

In terms of biological role, one of the early assembly proteins it binds 23S rRNA. One of the proteins that surrounds the polypeptide exit tunnel on the outside of the ribosome. Forms the main docking site for trigger factor binding to the ribosome. The chain is Large ribosomal subunit protein uL23 from Roseobacter denitrificans (strain ATCC 33942 / OCh 114) (Erythrobacter sp. (strain OCh 114)).